A 483-amino-acid polypeptide reads, in one-letter code: MSRGQSYLISFFRNRTRKNPNTQIRSLTVESRDCESKPDEQKSAVSYTEMAKTVSTIMRERQRWQQTLVSDFPSFDFADPLFFGELLKSQNNVLFSLWFFRWLCSNYDYTPGPVSLNILFGALLDGKAVKAAKSFLDTTGFKPEPTLLEQYVKCLSEEGLVEEAIEVYNVLKDMGISSSVVTCNSVLLGCLKARKLDRFWELHKEMVESEFDSERIRCLIRALCDGGDVSEGYELLKQGLKQGLDPGQYVYAKLISGFCEIGNYACMSEVLHTMIAWNHFPSMYIYQKIIKGLCMNKKQLEAYCIFKNLKDKGYAPDRVVYTTMIRGFCEKGWLGSARKLWFEMIKKGMRPNEFAYNVMIHGHFKRGEISLVEAFYNEMLRNGYGGTMLSCNTMIKGFCSHGKSDEAFEIFKNMSETGVTPNAITYNALIKGFCKENKVEKGLKLYKELKALGLKPSGMAYAALVRNLKMSDSVATSLNLEIV.

PPR repeat units follow at residues 144–178, 179–213, 218–246, 247–281, 282–316, 317–351, 352–386, 387–421, and 422–456; these read EPTL…GISS, SVVT…EFDS, CLIR…GLDP, GQYV…NHFP, SMYI…GYAP, DRVV…GMRP, NEFA…GYGG, TMLS…GVTP, and NAIT…GLKP.

The protein belongs to the PPR family. P subfamily.

The polypeptide is Pentatricopeptide repeat-containing protein At5g18950 (Arabidopsis thaliana (Mouse-ear cress)).